Reading from the N-terminus, the 245-residue chain is Ribonuclease PH (245 aa).

Phosphate is bound by residues Arg-86 and 124–126 (GTR).

The protein belongs to the RNase PH family. As to quaternary structure, homohexameric ring arranged as a trimer of dimers.

The enzyme catalyses tRNA(n+1) + phosphate = tRNA(n) + a ribonucleoside 5'-diphosphate. Its function is as follows. Phosphorolytic 3'-5' exoribonuclease that plays an important role in tRNA 3'-end maturation. Removes nucleotide residues following the 3'-CCA terminus of tRNAs; can also add nucleotides to the ends of RNA molecules by using nucleoside diphosphates as substrates, but this may not be physiologically important. Probably plays a role in initiation of 16S rRNA degradation (leading to ribosome degradation) during starvation. This is Ribonuclease PH from Bacillus cytotoxicus (strain DSM 22905 / CIP 110041 / 391-98 / NVH 391-98).